A 512-amino-acid polypeptide reads, in one-letter code: Bifunctional purine biosynthesis protein PurH (512 aa).

Residues 1 to 150 (MIGEERVVRA…KNFPAVLVLV (150 aa)) enclose the MGS-like domain.

Belongs to the PurH family.

The enzyme catalyses (6R)-10-formyltetrahydrofolate + 5-amino-1-(5-phospho-beta-D-ribosyl)imidazole-4-carboxamide = 5-formamido-1-(5-phospho-D-ribosyl)imidazole-4-carboxamide + (6S)-5,6,7,8-tetrahydrofolate. The catalysed reaction is IMP + H2O = 5-formamido-1-(5-phospho-D-ribosyl)imidazole-4-carboxamide. It participates in purine metabolism; IMP biosynthesis via de novo pathway; 5-formamido-1-(5-phospho-D-ribosyl)imidazole-4-carboxamide from 5-amino-1-(5-phospho-D-ribosyl)imidazole-4-carboxamide (10-formyl THF route): step 1/1. It functions in the pathway purine metabolism; IMP biosynthesis via de novo pathway; IMP from 5-formamido-1-(5-phospho-D-ribosyl)imidazole-4-carboxamide: step 1/1. This is Bifunctional purine biosynthesis protein PurH from Chloroflexus aurantiacus (strain ATCC 29366 / DSM 635 / J-10-fl).